Reading from the N-terminus, the 1061-residue chain is Zinc finger protein ZFPM1 (1061 aa).

Residues 152–185 form a CCHC FOG-type 1 zinc finger; the sequence is VVNKDVFPCKDCGIWYRSERNLQAHLMYYCASRQ. Zn(2+)-binding residues include C160, C163, H176, and C181. 3 C2H2-type zinc fingers span residues 204 to 228, 234 to 256, and 262 to 285; these read RICPFPQCKKSCPSTSSLEIHMRSH, FVCLICLSAFTTKANCERHLKVH, and GVCHGCGFISTTRDILYSHLVTNH. Disordered regions lie at residues 349–393 and 435–455; these read PSAT…SEET and TEMSSPTPGSSPVPNETGAAT. Residues 378 to 388 show a composition bias toward low complexity; sequence SPISSSSSASS. Over residues 436-448 the composition is skewed to polar residues; it reads EMSSPTPGSSPVP. Residues 508–541 form a CCHC FOG-type 2 zinc finger; that stretch reads SAVPKGATCFECEITFNNINNYYVHKRLYCSGRH. Zn(2+) is bound by residues C516, C519, H532, and C537. Disordered stretches follow at residues 561 to 586 and 599 to 630; these read ALASGFSSTEQEASPPQEDAGEESSA and MDCEGAGSGHVSEGSQSPSSLDDPEEDPNRTV. Residues 565-574 are compositionally biased toward polar residues; the sequence is GFSSTEQEAS. The CCHC FOG-type 3 zinc finger occupies 623 to 656; that stretch reads EEDPNRTVCGACNIRFSRHETYVVHKRYYCASRH. Positions 631, 634, 647, and 652 each coordinate Zn(2+). The tract at residues 661–681 is disordered; it reads RRREVNKPGPPYTTQPTPRTR. Residues 736–742 are interaction with CTBP; it reads PIDLSKK. Residues 759–792 form a CCHC FOG-type 4 zinc finger; the sequence is APLADYHECTACRISFNSLESYLAHKKFSCPTAP. The Zn(2+) site is built by C767, C770, H783, and C788. The C2H2-type 4 zinc finger occupies 869–892; it reads TTCPYCPHNVIIRGDLLEHFRSVH. The disordered stretch occupies residues 917-1021; the sequence is RGQTSSASEN…MQPPKPSLIS (105 aa). 2 stretches are compositionally biased toward low complexity: residues 933–942 and 954–972; these read VSSASPLQLP and TTSSSSSVNGSPILTSTPR. Pro residues predominate over residues 973–984; that stretch reads PLLPTSPAPPSN. Residues 1023 to 1056 form a CCHC FOG-type 5 zinc finger; sequence VPNGNHRYCRLCNIKFSSLSTFIAHKKYYCSSHA. Zn(2+) is bound by residues C1031, C1034, H1047, and C1052.

This sequence belongs to the FOG (Friend of GATA) family. Interacts with corepressor CTBP. Interacts with the N-terminal zinc-finger of GATA1 and probably GATA2. Predominantly expressed in heart and brain. Also expressed in ventral blood island and adult spleen.

The protein resides in the nucleus. In terms of biological role, transcription regulator that plays an central role in red blood cell differentiation. Essential cofactor that acts via the formation of a heterodimer with transcription factors of the GATA family GATA1 and GATA2. Such heterodimer can both activate or repress transcriptional activity, depending on the cell and promoter context. Acts as a repressor of red blood cells, probably by modulating activity of GATA1. The polypeptide is Zinc finger protein ZFPM1 (zfpm1) (Xenopus laevis (African clawed frog)).